The sequence spans 528 residues: T-complex protein 1 subunit delta (528 aa).

It belongs to the TCP-1 chaperonin family. In terms of assembly, heterooligomeric complex of about 850 to 900 kDa that forms two stacked rings, 12 to 16 nm in diameter.

Its subcellular location is the cytoplasm. Molecular chaperone; assists the folding of proteins upon ATP hydrolysis. Known to play a role, in vitro, in the folding of actin and tubulin. In yeast may play a role in mitotic spindle formation. The chain is T-complex protein 1 subunit delta (CCT4) from Saccharomyces cerevisiae (strain ATCC 204508 / S288c) (Baker's yeast).